The following is a 713-amino-acid chain: Bifunctional protein gal10 (713 aa).

The galactowaldenase stretch occupies residues 1-350 (MAVQDEYILV…TIENPFGFQI (350 aa)). 7 to 38 (YILVTGGAGYIGSHTVIELINHGYKVIIVDNL) lines the NAD(+) pocket. The mutarotase stretch occupies residues 351-713 (DNYKWKLFNT…SASYNSGEYY (363 aa)). His532 (for mutarotase activity) is an active-site residue.

This sequence in the N-terminal section; belongs to the NAD(P)-dependent epimerase/dehydratase family. It in the C-terminal section; belongs to the aldose epimerase family. The cofactor is NAD(+).

It catalyses the reaction UDP-alpha-D-glucose = UDP-alpha-D-galactose. The catalysed reaction is alpha-D-glucose = beta-D-glucose. The protein operates within carbohydrate metabolism; galactose metabolism. It participates in carbohydrate metabolism; hexose metabolism. Its function is as follows. Mutarotase converts alpha-aldose to the beta-anomer. It is active on D-glucose, L-arabinose, D-xylose, D-galactose, maltose and lactose. In Schizosaccharomyces pombe (strain 972 / ATCC 24843) (Fission yeast), this protein is Bifunctional protein gal10 (gal10).